The chain runs to 270 residues: Small ribosomal subunit protein uS3 (270 aa).

Positions 38–106 constitute a KH type-2 domain; the sequence is IRQMLTRGME…QVQLNILEVK (69 aa). The tract at residues 212–270 is disordered; it reads EREAAQAAQRAAGPQRRERPGRRRRGGGGGGGQQQQQAEKATAQATEAAKAAKSGNEGS. 2 stretches are compositionally biased toward low complexity: residues 216 to 225 and 245 to 263; these read AQAAQRAAGP and QQQQAEKATAQATEAAKAA.

Belongs to the universal ribosomal protein uS3 family. As to quaternary structure, part of the 30S ribosomal subunit. Forms a tight complex with proteins S10 and S14.

In terms of biological role, binds the lower part of the 30S subunit head. Binds mRNA in the 70S ribosome, positioning it for translation. This is Small ribosomal subunit protein uS3 from Thermobifida fusca (strain YX).